Consider the following 420-residue polypeptide: UDP-N-acetylmuramoylalanine--D-glutamate ligase (420 aa).

109 to 115 (GSAGKTT) is an ATP binding site.

This sequence belongs to the MurCDEF family.

The protein resides in the cytoplasm. It catalyses the reaction UDP-N-acetyl-alpha-D-muramoyl-L-alanine + D-glutamate + ATP = UDP-N-acetyl-alpha-D-muramoyl-L-alanyl-D-glutamate + ADP + phosphate + H(+). It participates in cell wall biogenesis; peptidoglycan biosynthesis. In terms of biological role, cell wall formation. Catalyzes the addition of glutamate to the nucleotide precursor UDP-N-acetylmuramoyl-L-alanine (UMA). The sequence is that of UDP-N-acetylmuramoylalanine--D-glutamate ligase from Chlamydia abortus (strain DSM 27085 / S26/3) (Chlamydophila abortus).